The chain runs to 122 residues: Large ribosomal subunit protein uL14 (122 aa).

The protein belongs to the universal ribosomal protein uL14 family. Part of the 50S ribosomal subunit. Forms a cluster with proteins L3 and L19. In the 70S ribosome, L14 and L19 interact and together make contacts with the 16S rRNA in bridges B5 and B8.

Its function is as follows. Binds to 23S rRNA. Forms part of two intersubunit bridges in the 70S ribosome. This Desulfatibacillum aliphaticivorans protein is Large ribosomal subunit protein uL14.